Reading from the N-terminus, the 273-residue chain is Undecaprenyl-diphosphatase (273 aa).

7 helical membrane passes run 6-26, 45-65, 90-110, 116-136, 190-210, 222-242, and 252-272; these read SLLV…LPVS, AKTF…VMFW, LTLI…LLFH, LFNP…LIAA, YAAS…ATAL, GDIP…LVAI, and ISFI…YVVF.

It belongs to the UppP family.

The protein localises to the cell inner membrane. It catalyses the reaction di-trans,octa-cis-undecaprenyl diphosphate + H2O = di-trans,octa-cis-undecaprenyl phosphate + phosphate + H(+). Catalyzes the dephosphorylation of undecaprenyl diphosphate (UPP). Confers resistance to bacitracin. The protein is Undecaprenyl-diphosphatase of Escherichia fergusonii (strain ATCC 35469 / DSM 13698 / CCUG 18766 / IAM 14443 / JCM 21226 / LMG 7866 / NBRC 102419 / NCTC 12128 / CDC 0568-73).